The primary structure comprises 273 residues: Ribosomal RNA small subunit methyltransferase A (273 aa).

Asparagine 19, leucine 21, glycine 46, glutamate 67, aspartate 92, and asparagine 113 together coordinate S-adenosyl-L-methionine.

Belongs to the class I-like SAM-binding methyltransferase superfamily. rRNA adenine N(6)-methyltransferase family. RsmA subfamily.

The protein resides in the cytoplasm. The enzyme catalyses adenosine(1518)/adenosine(1519) in 16S rRNA + 4 S-adenosyl-L-methionine = N(6)-dimethyladenosine(1518)/N(6)-dimethyladenosine(1519) in 16S rRNA + 4 S-adenosyl-L-homocysteine + 4 H(+). Specifically dimethylates two adjacent adenosines (A1518 and A1519) in the loop of a conserved hairpin near the 3'-end of 16S rRNA in the 30S particle. May play a critical role in biogenesis of 30S subunits. The polypeptide is Ribosomal RNA small subunit methyltransferase A (Hahella chejuensis (strain KCTC 2396)).